The primary structure comprises 62 residues: Kininogen-1 (62 aa).

The first 22 residues, 1–22 (MDILKKSLFLVLFLGLVSFSIC), serve as a signal peptide directing secretion. A disordered region spans residues 24-62 (EEKRDTEEEENDDEIEEESEEKKREAPERPPGFTPFRIY). The segment covering 30 to 42 (EEEENDDEIEEES) has biased composition (acidic residues). Residue Pro54 is modified to 4-hydroxyproline; partial. At Tyr62 the chain carries Sulfotyrosine.

The protein belongs to the frog skin active peptide (FSAP) family. Bradykinin-related peptide subfamily. As to expression, expressed by the skin glands.

It is found in the secreted. In terms of biological role, inhibits ACE with a Ki of 1.6 uM, and targets B2 bradykinin receptor (BDKRB2). Provokes contraction of smooth muscle preparation (ileum). In vivo, induces an early hyperalgesic effects in living rats after intraplantar injection. The chain is Kininogen-1 from Phyllomedusa sauvagei (Sauvage's leaf frog).